Here is a 322-residue protein sequence, read N- to C-terminus: Acetyl-coenzyme A carboxylase carboxyl transferase subunit alpha (322 aa).

Residues 32–293 (DISEEIARLE…KRALQDALRQ (262 aa)) form the CoA carboxyltransferase C-terminal domain.

The protein belongs to the AccA family. In terms of assembly, acetyl-CoA carboxylase is a heterohexamer composed of biotin carboxyl carrier protein (AccB), biotin carboxylase (AccC) and two subunits each of ACCase subunit alpha (AccA) and ACCase subunit beta (AccD).

It localises to the cytoplasm. It carries out the reaction N(6)-carboxybiotinyl-L-lysyl-[protein] + acetyl-CoA = N(6)-biotinyl-L-lysyl-[protein] + malonyl-CoA. The protein operates within lipid metabolism; malonyl-CoA biosynthesis; malonyl-CoA from acetyl-CoA: step 1/1. Functionally, component of the acetyl coenzyme A carboxylase (ACC) complex. First, biotin carboxylase catalyzes the carboxylation of biotin on its carrier protein (BCCP) and then the CO(2) group is transferred by the carboxyltransferase to acetyl-CoA to form malonyl-CoA. The chain is Acetyl-coenzyme A carboxylase carboxyl transferase subunit alpha from Aromatoleum aromaticum (strain DSM 19018 / LMG 30748 / EbN1) (Azoarcus sp. (strain EbN1)).